We begin with the raw amino-acid sequence, 407 residues long: Probable succinyl-diaminopimelate desuccinylase (407 aa).

His72 lines the Zn(2+) pocket. Asp74 is a catalytic residue. Asp105 is a binding site for Zn(2+). The active-site Proton acceptor is the Glu139. Residues Glu140, Glu165, and His378 each contribute to the Zn(2+) site.

This sequence belongs to the peptidase M20A family. Zn(2+) serves as cofactor. The cofactor is Co(2+).

It catalyses the reaction N-succinyl-(2S,6S)-2,6-diaminopimelate + H2O = (2S,6S)-2,6-diaminopimelate + succinate. It functions in the pathway amino-acid biosynthesis; L-lysine biosynthesis via DAP pathway; LL-2,6-diaminopimelate from (S)-tetrahydrodipicolinate (succinylase route): step 3/3. The chain is Probable succinyl-diaminopimelate desuccinylase (dapE) from Staphylococcus aureus (strain MRSA252).